Here is a 262-residue protein sequence, read N- to C-terminus: Small ribosomal subunit protein uS2 (262 aa).

Belongs to the universal ribosomal protein uS2 family.

This Azobacteroides pseudotrichonymphae genomovar. CFP2 protein is Small ribosomal subunit protein uS2.